We begin with the raw amino-acid sequence, 512 residues long: Histidine ammonia-lyase (512 aa).

The segment at residues 142 to 144 (ASG) is a cross-link (5-imidazolinone (Ala-Gly)). Residue S143 is modified to 2,3-didehydroalanine (Ser).

Belongs to the PAL/histidase family. In terms of processing, contains an active site 4-methylidene-imidazol-5-one (MIO), which is formed autocatalytically by cyclization and dehydration of residues Ala-Ser-Gly.

It localises to the cytoplasm. It catalyses the reaction L-histidine = trans-urocanate + NH4(+). Its pathway is amino-acid degradation; L-histidine degradation into L-glutamate; N-formimidoyl-L-glutamate from L-histidine: step 1/3. The polypeptide is Histidine ammonia-lyase (Bartonella quintana (strain Toulouse) (Rochalimaea quintana)).